A 536-amino-acid chain; its full sequence is Chaperonin GroEL 2 (536 aa).

Residues 29 to 32, Lys-50, Gly-416, and Asp-497 each bind ATP; that span reads TLGP.

Belongs to the chaperonin (HSP60) family. As to quaternary structure, forms a cylinder of 14 subunits composed of two heptameric rings stacked back-to-back. Interacts with the co-chaperonin GroES.

Its subcellular location is the cytoplasm. The catalysed reaction is ATP + H2O + a folded polypeptide = ADP + phosphate + an unfolded polypeptide.. Its function is as follows. Together with its co-chaperonin GroES, plays an essential role in assisting protein folding. The GroEL-GroES system forms a nano-cage that allows encapsulation of the non-native substrate proteins and provides a physical environment optimized to promote and accelerate protein folding. This chain is Chaperonin GroEL 2, found in Chlamydia caviae (strain ATCC VR-813 / DSM 19441 / 03DC25 / GPIC) (Chlamydophila caviae).